The primary structure comprises 1220 residues: Plasma membrane calcium-transporting ATPase 1 (1220 aa).

G2 carries the post-translational modification N-acetylglycine. The Cytoplasmic segment spans residues 2–105 (GDMANNSVAY…KTFLQLVWEA (104 aa)). S8 and S17 each carry phosphoserine. Residues 106–126 (LQDVTLIILEIAAIVSLGLSF) form a helical membrane-spanning segment. Residues 127 to 154 (YQPPEGDNALCGEVSVGEEEGEGETGWI) lie on the Extracellular side of the membrane. A helical transmembrane segment spans residues 155-175 (EGAAILLSVVCVVLVTAFNDW). At 176–366 (SKEKQFRGLQ…KEKSVLQGKL (191 aa)) the chain is on the cytoplasmic side. The interval 297–356 (EEEKKDEKKKEKKNKKQDGAIENRNKAKAQDGAAMEMQPLKSEEGGDGDEKDKKKANLPK) is disordered. Basic and acidic residues-rich tracts occupy residues 312 to 325 (KQDG…KAKA) and 337 to 356 (KSEE…NLPK). At S338 the chain carries Phosphoserine. The chain crosses the membrane as a helical span at residues 367-386 (TKLAVQIGKAGLLMSAITVI). Topologically, residues 387-418 (ILVLYFVIDTFWVQKRPWLAECTPIYIQYFVK) are extracellular. Residues 419–439 (FFIIGVTVLVVAVPEGLPLAV) form a helical membrane-spanning segment. Over 440 to 855 (TISLAYSVKK…RNVYDSISKF (416 aa)) the chain is Cytoplasmic. The active-site 4-aspartylphosphate intermediate is D475. Mg(2+) is bound by residues D475, T477, D797, and D801. A helical membrane pass occupies residues 856–876 (LQFQLTVNVVAVIVAFTGACI). Residues 877–882 (TQDSPL) lie on the Extracellular side of the membrane. Residues 883–903 (KAVQMLWVNLIMDTLASLALA) form a helical membrane-spanning segment. The Cytoplasmic portion of the chain corresponds to 904 to 927 (TEPPTESLLLRKPYGRNKPLISRT). Residues 928 to 948 (MMKNILGHAFYQLVVVFTLLF) traverse the membrane as a helical segment. Topologically, residues 949 to 971 (AGEKFFDIDSGRNAPLHAPPSEH) are extracellular. A helical membrane pass occupies residues 972–991 (YTIVFNTFVLMQLFNEINAR). Residues 992–1005 (KIHGERNVFEGIFN) are Cytoplasmic-facing. Residues 1006–1027 (NAIFCTIVLGTFVVQIIIVQFG) traverse the membrane as a helical segment. At 1028–1039 (GKPFSCSELSIE) the chain is on the extracellular side. A helical membrane pass occupies residues 1040 to 1060 (QWLWSIFLGMGTLLWGQLIST). Topologically, residues 1061–1220 (IPTSRLKFLK…SPLHSLETSL (160 aa)) are cytoplasmic. Residues 1100–1117 (LRRGQILWFRGLNRIQTQ) are calmodulin-binding subdomain A. T1116 is modified (phosphothreonine; by PKC). Residues 1118-1127 (IRVVNAFRSS) are calmodulin-binding subdomain B. The segment at 1118–1220 (IRVVNAFRSS…SPLHSLETSL (103 aa)) is required for basolateral membrane targeting. Phosphoserine occurs at positions 1140 and 1155. The tract at residues 1160-1220 (PLIDDTDAED…SPLHSLETSL (61 aa)) is disordered. T1165 bears the Phosphothreonine mark. Residues S1178 and S1182 each carry the phosphoserine modification. Over residues 1200-1220 (MNKSATSSSPGSPLHSLETSL) the composition is skewed to polar residues.

This sequence belongs to the cation transport ATPase (P-type) (TC 3.A.3) family. Type IIB subfamily. In terms of assembly, monomer. Dimer. Oligomer. Calmodulin binding. Interacts with PDZD11. Interacts with SLC35G1 and STIM1. Interacts with YWHAE; interacts with the monomeric and dimeric forms of the YWHAE but prefer the monomer form; this interaction inhibits calcium-transporting ATPase activity. Interacts with NPTN; this interaction stabilizes ATP2B1 and increases ATPase activity; this interaction controls T cell calcium homeostasis following T cell activation. Interacts with EPB41; regulates small intestinal calcium absorption through regulation of membrane expression of ATP2B1.

Its subcellular location is the cell membrane. It localises to the basolateral cell membrane. The protein localises to the synapse. It is found in the presynaptic cell membrane. The protein resides in the cytoplasmic vesicle. Its subcellular location is the secretory vesicle. It localises to the synaptic vesicle membrane. The enzyme catalyses Ca(2+)(in) + ATP + H2O = Ca(2+)(out) + ADP + phosphate + H(+). Its function is as follows. Catalyzes the hydrolysis of ATP coupled with the transport of calcium from the cytoplasm to the extracellular space thereby maintaining intracellular calcium homeostasis. Plays a role in blood pressure regulation through regulation of intracellular calcium concentration and nitric oxide production leading to regulation of vascular smooth muscle cells vasoconstriction. Positively regulates bone mineralization through absorption of calcium from the intestine. Plays dual roles in osteoclast differentiation and survival by regulating RANKL-induced calcium oscillations in preosteoclasts and mediating calcium extrusion in mature osteoclasts. Regulates insulin sensitivity through calcium/calmodulin signaling pathway by regulating AKT1 activation and NOS3 activation in endothelial cells. May play a role in synaptic transmission by modulating calcium and proton dynamics at the synaptic vesicles. The sequence is that of Plasma membrane calcium-transporting ATPase 1 from Sus scrofa (Pig).